We begin with the raw amino-acid sequence, 211 residues long: Leucyl/phenylalanyl-tRNA--protein transferase (211 aa).

Belongs to the L/F-transferase family.

It is found in the cytoplasm. It catalyses the reaction N-terminal L-lysyl-[protein] + L-leucyl-tRNA(Leu) = N-terminal L-leucyl-L-lysyl-[protein] + tRNA(Leu) + H(+). It carries out the reaction N-terminal L-arginyl-[protein] + L-leucyl-tRNA(Leu) = N-terminal L-leucyl-L-arginyl-[protein] + tRNA(Leu) + H(+). The enzyme catalyses L-phenylalanyl-tRNA(Phe) + an N-terminal L-alpha-aminoacyl-[protein] = an N-terminal L-phenylalanyl-L-alpha-aminoacyl-[protein] + tRNA(Phe). Functions in the N-end rule pathway of protein degradation where it conjugates Leu, Phe and, less efficiently, Met from aminoacyl-tRNAs to the N-termini of proteins containing an N-terminal arginine or lysine. This is Leucyl/phenylalanyl-tRNA--protein transferase from Flavobacterium psychrophilum (strain ATCC 49511 / DSM 21280 / CIP 103535 / JIP02/86).